The sequence spans 504 residues: Multidrug efflux pump LfrA (504 aa).

Helical transmembrane passes span 19 to 39 (WVAL…NTVL), 58 to 78 (LWIV…MGSL), 87 to 107 (LLLI…FAPS), 110 to 130 (LLVG…PSTL), 145 to 165 (LAIA…PIVG), 172 to 192 (FHWG…LVLG), 206 to 226 (PFDP…VWAV), 233 to 253 (GLSA…ALFV), 275 to 295 (TSSI…IFFI), 309 to 329 (TAGL…LAVV), 338 to 358 (DTLM…ILLF), 361 to 381 (NLTV…VGVS), 408 to 428 (AYEL…TAFY), and 480 to 500 (IAPT…VVGV).

The protein belongs to the major facilitator superfamily.

It localises to the cell inner membrane. Inhibited by the protonophore carbonyl cyanide m-chorophenylhydrazone (CCCP). Ethidium bromide efflux is inhibited by chlorpromazine, thioridazine and verapamil. Its function is as follows. Energy-dependent efflux pump that contributes to drug resistance. Catalyzes the efflux of norfloxacin and several related fluoroquinolones (FQ). Contributes significantly to the intrinsic MICs for ethidium bromide and acriflavine. Overexpression confers low-level resistance to hydrophilic FQ such as ciprofloxacin, ofloxacin and levofloxacin, and to ethidium bromide, acridine, acriflavine, rhodamine 123 and some quaternary ammonium compounds. May contribute to resistance to certain beta-lactams. Probably uses the proton motive force to export drugs. The sequence is that of Multidrug efflux pump LfrA from Mycolicibacterium smegmatis (strain ATCC 700084 / mc(2)155) (Mycobacterium smegmatis).